Consider the following 1396-residue polypeptide: DNA-directed RNA polymerase subunit beta' (1396 aa).

4 residues coordinate Zn(2+): C73, C75, C88, and C91. D467, D469, and D471 together coordinate Mg(2+). Zn(2+)-binding residues include C817, C891, C898, and C901.

The protein belongs to the RNA polymerase beta' chain family. The RNAP catalytic core consists of 2 alpha, 1 beta, 1 beta' and 1 omega subunit. When a sigma factor is associated with the core the holoenzyme is formed, which can initiate transcription. It depends on Mg(2+) as a cofactor. Zn(2+) serves as cofactor.

The catalysed reaction is RNA(n) + a ribonucleoside 5'-triphosphate = RNA(n+1) + diphosphate. Its function is as follows. DNA-dependent RNA polymerase catalyzes the transcription of DNA into RNA using the four ribonucleoside triphosphates as substrates. This chain is DNA-directed RNA polymerase subunit beta', found in Orientia tsutsugamushi (strain Boryong) (Rickettsia tsutsugamushi).